Here is a 343-residue protein sequence, read N- to C-terminus: L-threonine 3-dehydrogenase (343 aa).

Residue Cys-38 coordinates Zn(2+). Active-site charge relay system residues include Thr-40 and His-43. Residues His-63, Glu-64, Cys-93, Cys-96, Cys-99, and Cys-107 each coordinate Zn(2+). Residues Ile-175, Asp-195, Arg-200, 262–264, and 286–287 each bind NAD(+); these read LGL and IY.

Belongs to the zinc-containing alcohol dehydrogenase family. As to quaternary structure, homotetramer. It depends on Zn(2+) as a cofactor.

Its subcellular location is the cytoplasm. It carries out the reaction L-threonine + NAD(+) = (2S)-2-amino-3-oxobutanoate + NADH + H(+). It functions in the pathway amino-acid degradation; L-threonine degradation via oxydo-reductase pathway; glycine from L-threonine: step 1/2. Its function is as follows. Catalyzes the NAD(+)-dependent oxidation of L-threonine to 2-amino-3-ketobutyrate. The sequence is that of L-threonine 3-dehydrogenase from Saccharopolyspora erythraea (strain ATCC 11635 / DSM 40517 / JCM 4748 / NBRC 13426 / NCIMB 8594 / NRRL 2338).